A 206-amino-acid chain; its full sequence is Sperm acrosome developmental regulator (206 aa).

Residues 180–206 form a disordered region; it reads RRHHVRCHAAPRPNPAQSLKLDAQSPL.

Expressed in sperm (at protein level).

The protein localises to the cytoplasmic vesicle. Its subcellular location is the secretory vesicle. It localises to the acrosome. Functionally, may play a role in acrosome formation and nucleus shaping during spermiogenesis. The protein is Sperm acrosome developmental regulator of Homo sapiens (Human).